The sequence spans 101 residues: Interleukin-8 (101 aa).

The signal sequence occupies residues Met1–Ala22. A Citrulline modification is found at Arg27. 2 disulfides stabilise this stretch: Cys34–Cys61 and Cys36–Cys77.

This sequence belongs to the intercrine alpha (chemokine CxC) family. Homodimer. Interacts with TNFAIP6 (via Link domain); this interaction interferes with chemokine binding to glycosaminoglycans. Citrullination at Arg-27 prevents proteolysis, and dampens tissue inflammation, it also enhances leukocytosis, possibly through impaired chemokine clearance from the blood circulation.

Its subcellular location is the secreted. Its function is as follows. Chemotactic factor that mediates inflammatory response by attracting neutrophils, basophils, and T-cells to clear pathogens and protect the host from infection. Also plays an important role in neutrophil activation. Released in response to an inflammatory stimulus, exerts its effect by binding to the G-protein-coupled receptors CXCR1 and CXCR2, primarily found in neutrophils, monocytes and endothelial cells. G-protein heterotrimer (alpha, beta, gamma subunits) constitutively binds to CXCR1/CXCR2 receptor and activation by IL8 leads to beta and gamma subunits release from Galpha (GNAI2 in neutrophils) and activation of several downstream signaling pathways including PI3K and MAPK pathways. This Felis catus (Cat) protein is Interleukin-8 (CXCL8).